We begin with the raw amino-acid sequence, 297 residues long: MSEKKFRSGFVSIVGRPNVGKSTLLNRILGEKLMITSDKPQTTRNRIKGIHNVPGGQIVFIDTPGIHRAKSRLNKFMVDEALSSVQGVDLILFLVDGAVDPEKEAGMIKEVLSGVDAPVILVMNKIDLVPKGELLERMSCYGDTYPFKEIIPVSAGTGDGVEQLVQLVHGLLPEGPCYFPDDILTDVPERFIVAEIVREKIFRLTHDEVPYSTAVVVDSFKERENGVVAISATINVERDSQKGIIIGKRGDMLKRIGTQSRQEIERLLDTKVFLELFVRVSGEWSDNSRMLKEFGYE.

The 168-residue stretch at 7-174 folds into the Era-type G domain; the sequence is RSGFVSIVGR…VQLVHGLLPE (168 aa). A G1 region spans residues 15-22; the sequence is GRPNVGKS. 15–22 is a binding site for GTP; that stretch reads GRPNVGKS. The segment at 41-45 is G2; that stretch reads QTTRN. Residues 62–65 are G3; the sequence is DTPG. Residues 62-66 and 124-127 contribute to the GTP site; these read DTPGI and NKID. Residues 124 to 127 form a G4 region; it reads NKID. Residues 153–155 form a G5 region; sequence VSA. The KH type-2 domain occupies 205 to 282; the sequence is THDEVPYSTA…FLELFVRVSG (78 aa).

Belongs to the TRAFAC class TrmE-Era-EngA-EngB-Septin-like GTPase superfamily. Era GTPase family. Monomer.

The protein resides in the cytoplasm. It localises to the cell inner membrane. Its function is as follows. An essential GTPase that binds both GDP and GTP, with rapid nucleotide exchange. Plays a role in 16S rRNA processing and 30S ribosomal subunit biogenesis and possibly also in cell cycle regulation and energy metabolism. In Geobacter sp. (strain M21), this protein is GTPase Era.